A 762-amino-acid chain; its full sequence is Polyribonucleotide nucleotidyltransferase (762 aa).

Mg(2+) is bound by residues Asp531 and Asp537. Residues Pro597–Ile656 form the KH domain. One can recognise an S1 motif domain in the interval Gly668–Val737.

Belongs to the polyribonucleotide nucleotidyltransferase family. Requires Mg(2+) as cofactor.

The protein resides in the cytoplasm. The catalysed reaction is RNA(n+1) + phosphate = RNA(n) + a ribonucleoside 5'-diphosphate. In terms of biological role, involved in mRNA degradation. Catalyzes the phosphorolysis of single-stranded polyribonucleotides processively in the 3'- to 5'-direction. The sequence is that of Polyribonucleotide nucleotidyltransferase from Mycobacterium marinum (strain ATCC BAA-535 / M).